Consider the following 59-residue polypeptide: UPF0434 protein Rsph17029_0141 (59 aa).

The protein belongs to the UPF0434 family.

The chain is UPF0434 protein Rsph17029_0141 from Cereibacter sphaeroides (strain ATCC 17029 / ATH 2.4.9) (Rhodobacter sphaeroides).